Reading from the N-terminus, the 294-residue chain is tRNA dimethylallyltransferase (294 aa).

10 to 17 serves as a coordination point for ATP; it reads GPTAVGKT. Residue 12 to 17 coordinates substrate; it reads TAVGKT. An interaction with substrate tRNA region spans residues 35–38; that stretch reads DSQQ.

Belongs to the IPP transferase family. Monomer. Mg(2+) serves as cofactor.

It catalyses the reaction adenosine(37) in tRNA + dimethylallyl diphosphate = N(6)-dimethylallyladenosine(37) in tRNA + diphosphate. Functionally, catalyzes the transfer of a dimethylallyl group onto the adenine at position 37 in tRNAs that read codons beginning with uridine, leading to the formation of N6-(dimethylallyl)adenosine (i(6)A). The sequence is that of tRNA dimethylallyltransferase from Streptococcus mutans serotype c (strain ATCC 700610 / UA159).